The chain runs to 405 residues: Glucoside xylosyltransferase 1 (405 aa).

The Cytoplasmic segment spans residues 1 to 2 (MR). Residues 3–23 (IYLRTFGLCIVVALLSLVFLF) traverse the membrane as a helical; Signal-anchor for type II membrane protein segment. Over 24–405 (SKHDEGSFSA…RLQRATPPGD (382 aa)) the chain is Lumenal. The interval 46–65 (SFNGAKAKQRPTATTSHRDV) is disordered. N-linked (GlcNAc...) asparagine glycans are attached at residues Asn202, Asn243, Asn277, and Asn372.

The protein belongs to the glycosyltransferase 8 family.

Its subcellular location is the membrane. The catalysed reaction is 3-O-(beta-D-glucosyl)-L-seryl-[EGF-like domain protein] + UDP-alpha-D-xylose = 3-O-[alpha-D-xylosyl-(1-&gt;3)-beta-D-glucosyl]-L-seryl-[EGF-like domain protein] + UDP + H(+). Functionally, glycosyltransferase which elongates the O-linked glucose attached to EGF-like repeats in the extracellular domain of Notch proteins by catalyzing the addition of xylose. The protein is Glucoside xylosyltransferase 1 (gxylt1) of Danio rerio (Zebrafish).